We begin with the raw amino-acid sequence, 801 residues long: Mitochondrial intermediate peptidase (801 aa).

A mitochondrion-targeting transit peptide spans 1–41 (MKDQLLVPLRRRPWTCQKCLQRLQLPRHQTRRSFETAASPF). Histidine 564 contributes to the Zn(2+) binding site. Glutamate 565 is an active-site residue. Zn(2+) contacts are provided by histidine 568 and histidine 571.

The protein belongs to the peptidase M3 family. Zn(2+) is required as a cofactor.

It is found in the mitochondrion matrix. The enzyme catalyses Release of an N-terminal octapeptide as second stage of processing of some proteins imported into the mitochondrion.. Its function is as follows. Cleaves proteins, imported into the mitochondrion, to their mature size. While most mitochondrial precursor proteins are processed to the mature form in one step by mitochondrial processing peptidase (MPP), the sequential cleavage by MIP of an octapeptide after initial processing by MPP is a required step for a subgroup of nuclear-encoded precursor proteins destined for the matrix or the inner membrane. The polypeptide is Mitochondrial intermediate peptidase (oct1) (Aspergillus fumigatus (strain CBS 144.89 / FGSC A1163 / CEA10) (Neosartorya fumigata)).